A 608-amino-acid polypeptide reads, in one-letter code: Chaperone protein HtpG (608 aa).

The segment at 1 to 332 (MQFQTEVNQL…VEDLPLNVSR (332 aa)) is a; substrate-binding. A b region spans residues 333–536 (EILQENQILK…KNKLDFAMQQ (204 aa)). Residues 537–608 (LLKQMGQEQN…LTKIINKAFS (72 aa)) form a c region.

The protein belongs to the heat shock protein 90 family. Homodimer.

The protein resides in the cytoplasm. Molecular chaperone. Has ATPase activity. This Campylobacter jejuni subsp. doylei (strain ATCC BAA-1458 / RM4099 / 269.97) protein is Chaperone protein HtpG.